A 240-amino-acid polypeptide reads, in one-letter code: Molybdate/tungstate import ATP-binding protein WtpC (240 aa).

The 226-residue stretch at 2 to 227 (FLKVRAEKRL…KNGEVAEFLS (226 aa)) folds into the ABC transporter domain. 31–38 (GPTGAGKS) contributes to the ATP binding site.

Belongs to the ABC transporter superfamily. Sulfate/tungstate importer (TC 3.A.1.6) family. In terms of assembly, the complex is composed of two ATP-binding proteins (WtpC), two transmembrane proteins (WtpB) and a solute-binding protein (WtpA).

The protein resides in the cell membrane. The catalysed reaction is tungstate(in) + ATP + H2O = tungstate(out) + ADP + phosphate + H(+). Its function is as follows. Part of the ABC transporter complex WtpABC involved in molybdate/tungstate import. Responsible for energy coupling to the transport system. The chain is Molybdate/tungstate import ATP-binding protein WtpC (wtpC) from Archaeoglobus fulgidus (strain ATCC 49558 / DSM 4304 / JCM 9628 / NBRC 100126 / VC-16).